The sequence spans 267 residues: Dolichol-phosphate mannosyltransferase (267 aa).

The residue at position 2 (Ser-2) is an N-acetylserine. At 2–238 (SIEYSVIVPA…QQLKELYVFK (237 aa)) the chain is on the cytoplasmic side. Residues Pro-10, Tyr-12, Glu-14, Val-42, Asp-44, Asp-95, Ala-96, Asp-97, Gln-99, and Arg-122 each coordinate GDP-alpha-D-mannose. Mg(2+) contacts are provided by Asp-97 and Gln-99. Positions 97 and 99 each coordinate Mn(2+). Ser-141 bears the Phosphoserine; by PKA mark. Lys-183, Arg-212, and Lys-218 together coordinate GDP-alpha-D-mannose. A helical; Anchor for type IV membrane protein transmembrane segment spans residues 239 to 259 (FGANNLILFITFWSILFFYVC). The Lumenal segment spans residues 260 to 267 (YQLYHLVF).

It belongs to the glycosyltransferase 2 family. As to quaternary structure, interacts with the C-terminus of SAC1, thereby sequestering it to the endoplasmic reticulum in exponentially growing cells. Under nutrient limitation conditions, this interaction is rapidly abolished. Requires Mg(2+) as cofactor. Mn(2+) serves as cofactor. The cofactor is Ca(2+).

Its subcellular location is the endoplasmic reticulum membrane. The enzyme catalyses a di-trans,poly-cis-dolichyl phosphate + GDP-alpha-D-mannose = a di-trans,poly-cis-dolichyl beta-D-mannosyl phosphate + GDP. The protein operates within protein modification; protein glycosylation. Inhibited by acetylsalicylic acid (aspirin). Its function is as follows. Transfers mannose from GDP-mannose to dolichol monophosphate to form dolichol phosphate mannose (Dol-P-Man) which is the mannosyl donor in pathways leading to N-glycosylation, glycosyl phosphatidylinositol membrane anchoring, and O-mannosylation of proteins. This chain is Dolichol-phosphate mannosyltransferase, found in Saccharomyces cerevisiae (strain ATCC 204508 / S288c) (Baker's yeast).